The chain runs to 268 residues: Ethylene-responsive transcription factor ERN1 (268 aa).

The segment covering 1-21 (MEIQFQQPNMQNQKAGISVTN) has biased composition (polar residues). Positions 1–36 (MEIQFQQPNMQNQKAGISVTNKGGKFKGRNRNSNNT) are disordered. Positions 38-95 (KFVGVRQRPSGRWVAEIKDTTQKIRMWLGTFETAEEAARAYDEAACLLRGSNTRTNFI) form a DNA-binding region, AP2/ERF. The interval 114–154 (NRKGDKKQEDGAVASAPSNSKTTISNTSTITSNDDNKESTL) is disordered. The segment covering 131 to 146 (SNSKTTISNTSTITSN) has biased composition (low complexity).

The protein belongs to the AP2/ERF transcription factor family. ERF subfamily. In terms of tissue distribution, expressed in roots, root hairs and leaves. Expressed in root epidermis and root hairs.

Its subcellular location is the nucleus. Transcription factor involved in symbiotic nodule signaling in response to rhizobial Nod factors (NFs). Binds to the GCC-box (NF-responsive box) of ENOD11 promoter. Acts as a transcriptional activator of NF-responsive box-containing target gene promoters in root hairs. Functions as a transcriptional regulator required for root infection by symbiotic rhizobia, infection thread (IT) formation and maintenance, and nodule development. Necessary for NF-induced gene expression and spontaneous nodulation activated by CCAMK. Functions downstream of CCAMK to activate nodulation gene expression. Involved in early stages of root nodule development. Functions redundantly with ERN2. Is essential with ERN2 for the initiation of root hair infection, and nodule organogenesis and development. Required for accurate expression of the NF signaling genes ENOD11 and ENOD12. The sequence is that of Ethylene-responsive transcription factor ERN1 from Medicago truncatula (Barrel medic).